Consider the following 570-residue polypeptide: Protein HEATR9 (570 aa).

This chain is Protein HEATR9 (HEATR9), found in Homo sapiens (Human).